Reading from the N-terminus, the 275-residue chain is U6 snRNA phosphodiesterase 1 (275 aa).

The segment at 1–25 (MEFLKHYEDDEDQDDENNTKDENVN) is disordered. The active-site Proton acceptor is His-122. Residues 122-124 (HIS), Tyr-206, and 208-214 (NPEPHLS) contribute to the AMP site. UMP is bound by residues Tyr-206 and 210 to 214 (EPHLS). The active-site Proton donor is the His-212.

It belongs to the 2H phosphoesterase superfamily. USB1 family.

Its subcellular location is the nucleus. It catalyses the reaction a 3'-end uridylyl-uridine-RNA = a 3'-end 2',3'-cyclophospho-uridine-RNA + uridine. Its function is as follows. 3'-5' RNA exonuclease that trims the 3' end of oligo(U) tracts of the pre-U6 small nuclear RNA (snRNA) molecule, leading to the formation of a mature U6 snRNA 3' end-terminated with a 2',3'-cyclic phosphate. Participates in the U6 snRNA 3' end processing that prevents U6 snRNA degradation. This chain is U6 snRNA phosphodiesterase 1, found in Dictyostelium discoideum (Social amoeba).